The following is a 255-amino-acid chain: Putative deoxyribonuclease tatdn3-B (255 aa).

Positions 11, 13, 106, 129, 152, and 199 each coordinate Zn(2+).

Belongs to the metallo-dependent hydrolases superfamily. TatD-type hydrolase family. It depends on Mn(2+) as a cofactor. Ca(2+) serves as cofactor. The cofactor is Mg(2+). Requires Zn(2+) as cofactor.

It is found in the nucleus. With respect to regulation, the 3'-exonuclease activity is sensitive to the metal ion present in the active site, whereas the AP endodeoxyribonuclease activity is observed in a variety of divalent metal cofactors. 3'-exoxonuclease activity is suppressed in the presence of Ca(2+), Zn(2+) and Ni(2+). Functionally, exhibits 3'-exonuclease activities and apurinic/apyrimidinic (AP) endonuclease (in vitro). Show preferential AP endonuclease activity on double-stranded DNA substrates and 3'- exonuclease activity on single-stranded DNA. The chain is Putative deoxyribonuclease tatdn3-B (tatdn3-b) from Xenopus laevis (African clawed frog).